Consider the following 199-residue polypeptide: Prostatic spermine-binding protein (199 aa).

The signal sequence occupies residues 1–18 (MLLLLTLAFLASPTCRAQ). A Jacalin-type lectin domain is found at 19–151 (NVLGNAAGKY…VRGIGFKWGN (133 aa)). Residue asparagine 62 is glycosylated (N-linked (GlcNAc...) asparagine). The disordered stretch occupies residues 159-199 (HYNNKEDKADNKDADNKDADNKDDGDEDDDGNDDDDQKDES). Residues 160 to 180 (YNNKEDKADNKDADNKDADNK) are compositionally biased toward basic and acidic residues. A compositionally biased stretch (acidic residues) spans 181 to 199 (DDGDEDDDGNDDDDQKDES).

To rat SBP. In terms of tissue distribution, prostate.

In terms of biological role, this protein seems to be functional equivalent to rat prostatic spermine-binding protein, which is involved in polyamine binding. In Mus musculus (Mouse), this protein is Prostatic spermine-binding protein (Sbp).